Consider the following 375-residue polypeptide: Odorant receptor 10 (375 aa).

6 consecutive transmembrane segments (helical) span residues 32-52, 58-78, 125-145, 167-187, 250-270, and 279-299; these read ISII…GHSW, VIIK…TLIL, NLAL…FTGV, IIYL…IPFT, YICF…LFLL, and IVIV…FYWH.

This sequence belongs to the insect chemoreceptor superfamily. Heteromeric odorant receptor channel (TC 1.A.69) family. As to expression, expressed in female antenna, maxillary palp and proboscis. Expressed in female body. Expressed in male tissues.

Its subcellular location is the cell membrane. Odorant receptor which complexes with Orco, a coreceptor, to form odorant-sensing units, providing sensitive and prolonged odorant signaling and calcium permeability. Can sense indole, 1-octen-3-ol, 3-methyindole and an insect repellent DEET. This is Odorant receptor 10 from Aedes albopictus (Asian tiger mosquito).